The chain runs to 211 residues: N-(5'-phosphoribosyl)anthranilate isomerase (211 aa).

This sequence belongs to the TrpF family.

It catalyses the reaction N-(5-phospho-beta-D-ribosyl)anthranilate = 1-(2-carboxyphenylamino)-1-deoxy-D-ribulose 5-phosphate. The protein operates within amino-acid biosynthesis; L-tryptophan biosynthesis; L-tryptophan from chorismate: step 3/5. In Pseudomonas aeruginosa (strain UCBPP-PA14), this protein is N-(5'-phosphoribosyl)anthranilate isomerase.